An 891-amino-acid chain; its full sequence is Tubulin polyglutamylase TTLL6 (891 aa).

Disordered stretches follow at residues 1–25 and 44–106; these read MGAL…SSPA and SQAR…KRKK. The span at 63–76 shows a compositional bias: basic and acidic residues; it reads SEEKGDSSKEDPKE. Over residues 88–99 the composition is skewed to low complexity; it reads GAQNGLQNAQQQ. The TTL domain occupies 106-449; it reads KKRLVINLSS…ESCDKKKVLE (344 aa). Residues lysine 223, 229–230, 251–254, and 264–266 each bind ATP; these read QG, QLYI, and KFD. An a protein-binding site is contributed by glutamine 229. L-glutamate is bound at residue arginine 290. Position 312-313 (312-313) interacts with ATP; the sequence is TN. Tyrosine 314, serine 315, and lysine 332 together coordinate L-glutamate. Mg(2+) contacts are provided by aspartate 395, glutamate 408, and asparagine 410. Position 411 (histidine 411) interacts with a protein. The interval 420 to 499 is c-MTBD region; it reads RLDKEVKDGL…CGGFRLIYPS (80 aa). Position 426 (lysine 426) interacts with L-glutamate. 4 disordered regions span residues 546–584, 607–636, 687–711, and 800–820; these read QMKK…ATQA, GERK…LTSA, TTPE…TASS, and NNLS…DSSG. Residues 687–699 show a composition bias toward polar residues; sequence TTPESTTQLSISP.

It belongs to the tubulin--tyrosine ligase family. As to quaternary structure, found in a complex with CEP41. Mg(2+) serves as cofactor.

It is found in the cytoplasm. It localises to the cytoskeleton. The protein localises to the cilium axoneme. Its subcellular location is the cilium basal body. The enzyme catalyses L-glutamyl-[protein] + L-glutamate + ATP = gamma-L-glutamyl-L-glutamyl-[protein] + ADP + phosphate + H(+). The catalysed reaction is (L-glutamyl)(n)-gamma-L-glutamyl-L-glutamyl-[protein] + L-glutamate + ATP = (L-glutamyl)(n+1)-gamma-L-glutamyl-L-glutamyl-[protein] + ADP + phosphate + H(+). Polyglutamylase which modifies both tubulin and non-tubulin proteins, generating alpha-linked polyglutamate side chains on the gamma-carboxyl group of specific glutamate residues of target proteins. Preferentially mediates ATP-dependent long polyglutamate chain elongation over the initiation step of the polyglutamylation reaction. Preferentially modifies the alpha-tubulin tail over a beta-tail. Promotes tubulin polyglutamylation which stimulates spastin/SPAST-mediated microtubule severing, thereby regulating microtubule functions. Mediates microtubule polyglutamylation in primary cilia axoneme, which is important for ciliary structural formation and motility. Mediates microtubule polyglutamylation in motile cilia, necessary for the regulation of ciliary coordinated beating. Polyglutamylates non-tubulin protein nucleotidyltransferase CGAS, leading to CGAS DNA-binding inhibition, thereby preventing antiviral defense response. The polypeptide is Tubulin polyglutamylase TTLL6 (Homo sapiens (Human)).